The sequence spans 349 residues: D-alanine--D-alanine ligase (349 aa).

Positions N140 to E345 constitute an ATP-grasp domain. Residue N169 to S224 coordinates ATP. Mg(2+) contacts are provided by D300, E312, and N314.

It belongs to the D-alanine--D-alanine ligase family. Mg(2+) serves as cofactor. The cofactor is Mn(2+).

The protein localises to the cytoplasm. The catalysed reaction is 2 D-alanine + ATP = D-alanyl-D-alanine + ADP + phosphate + H(+). Its pathway is cell wall biogenesis; peptidoglycan biosynthesis. Its function is as follows. Cell wall formation. This chain is D-alanine--D-alanine ligase, found in Leptospira biflexa serovar Patoc (strain Patoc 1 / Ames).